Consider the following 341-residue polypeptide: Ferrochelatase (341 aa).

Residues His-189 and Glu-293 each coordinate Fe cation.

It belongs to the ferrochelatase family.

It localises to the cytoplasm. It carries out the reaction heme b + 2 H(+) = protoporphyrin IX + Fe(2+). It participates in porphyrin-containing compound metabolism; protoheme biosynthesis; protoheme from protoporphyrin-IX: step 1/1. Its function is as follows. Catalyzes the ferrous insertion into protoporphyrin IX. In Stutzerimonas stutzeri (strain A1501) (Pseudomonas stutzeri), this protein is Ferrochelatase.